The following is a 348-amino-acid chain: Rhodopsin (348 aa).

N-acetylmethionine is present on M1. Topologically, residues 1–36 (MNGTEGPNFYVPFSNKTGVVRSPFEAPQYYLAEPWQ) are extracellular. N-linked (GlcNAc...) asparagine glycosylation is found at N2 and N15. The chain crosses the membrane as a helical span at residues 37 to 61 (FSMLAAYMFLLIVLGFPINFLTLYV). Topologically, residues 62–73 (TVQHKKLRTPLN) are cytoplasmic. Residues 74-96 (YILLNLAVADLFMVFGGFTTTLY) form a helical membrane-spanning segment. Over 97–110 (TSLHGYFVFGPTGC) the chain is Extracellular. Cysteines 110 and 187 form a disulfide. The helical transmembrane segment at 111–133 (NLEGFFATLGGEIALWSLVVLAI) threads the bilayer. A 'Ionic lock' involved in activated form stabilization motif is present at residues 134–136 (ERY). Over 134-152 (ERYVVVCKPMSNFRFGENH) the chain is Cytoplasmic. A helical membrane pass occupies residues 153-173 (AIMGVAFTWVMALACAAPPLV). Topologically, residues 174–202 (GWSRYIPQGMQCSCGALYFTLKPEINNES) are extracellular. Residue E201 participates in Zn(2+) binding. A helical membrane pass occupies residues 203-224 (FVIYMFVVHFSIPLIVIFFCYG). Residues 225–252 (QLVFTVKEAAAQQQESATTQKAEKEVTR) are Cytoplasmic-facing. Residues 253–274 (MVIIMVIAFLICWLPYAGVAFY) traverse the membrane as a helical segment. Residues 275 to 286 (IFTHQGSDFGPI) lie on the Extracellular side of the membrane. Q279 contacts Zn(2+). The chain crosses the membrane as a helical span at residues 287–308 (FMTIPAFFAKSSSVYNPVIYIM). K296 bears the N6-(retinylidene)lysine mark. At 309–348 (MNKQFRNCMLTTLCCGKNPLGDDEASTTVSKTETSQVAPA) the chain is on the cytoplasmic side. S-palmitoyl cysteine attachment occurs at residues C322 and C323. The tract at residues 330 to 348 (DDEASTTVSKTETSQVAPA) is interaction with SAG. A Phosphoserine modification is found at S334. The residue at position 334 (S334) is a Phosphoserine; by RK and GRK7. A phosphothreonine mark is found at T335 and T336. A phosphothreonine; by RK and GRK7 mark is found at T335 and T336. Residue S338 is modified to Phosphoserine; by RK and GRK7. Residues T340 and T342 each carry the phosphothreonine modification. S343 is subject to Phosphoserine; by RK and GRK7.

It belongs to the G-protein coupled receptor 1 family. Opsin subfamily. In terms of assembly, homodimer. May form a complex composed of RHO, GRK1 and RCVRN in a Ca(2+)-dependent manner; RCVRN prevents the interaction between GRK1 and RHO. Interacts with GRK1. Interacts (phosphorylated form) with SAG. Interacts with GNAT1. Interacts with GNAT3. SAG and G-proteins compete for a common binding site. Interacts with PRCD; the interaction promotes PRCD stability. Forms a complex with ASAP1 and ARF4. Forms a complex with ASAP1, RAB11A, Rabin8/RAB3IP, ARF4 and RAB11FIP3; the complex regulates Golgi-to-cilia rhodopsin/RHO transport in photoreceptors. Post-translationally, phosphorylated on some or all of the serine and threonine residues present in the C-terminal region. Contains one covalently linked retinal chromophore. Upon light absorption, the covalently bound 11-cis-retinal is converted to all-trans-retinal. After hydrolysis of the Schiff base and release of the covalently bound all-trans-retinal, active rhodopsin is regenerated by binding of a fresh molecule of 11-cis-retinal.

It localises to the membrane. The protein localises to the cell projection. It is found in the cilium. Its subcellular location is the photoreceptor outer segment. Its function is as follows. Photoreceptor required for image-forming vision at low light intensity. Required for photoreceptor cell viability after birth. Light-induced isomerization of 11-cis to all-trans retinal triggers a conformational change that activates signaling via G-proteins. Subsequent receptor phosphorylation mediates displacement of the bound G-protein alpha subunit by the arrestin SAG and terminates signaling. This chain is Rhodopsin (RHO), found in Ovis aries (Sheep).